We begin with the raw amino-acid sequence, 318 residues long: Olfactory receptor 13C9 (318 aa).

The Extracellular segment spans residues 1–25 (MEWENQTILVEFFLKGHSVHPRLEL). N-linked (GlcNAc...) asparagine glycosylation is present at Asn-5. The helical transmembrane segment at 26 to 46 (LFFVLIFIMYVVILLGNGTLI) threads the bilayer. Topologically, residues 47-54 (LISILDPH) are cytoplasmic. A helical transmembrane segment spans residues 55–75 (LHTPMYFFLGNLSFLDICYTT). The Extracellular segment spans residues 76–99 (TSIPSTLVSFLSERKTISFSGCAV). A disulfide bond links Cys-97 and Cys-189. A helical membrane pass occupies residues 100–120 (QMFLGLAMGTTECVLLGMMAF). The Cytoplasmic portion of the chain corresponds to 121–139 (DRYVAICNPLRYPIIMSKN). A helical membrane pass occupies residues 140–160 (AYVPMAVGSWFAGIVNSAVQT). Topologically, residues 161–197 (TFVVQLPFCRKNVINHFSCEILAVMKLACADISGNEF) are extracellular. The helical transmembrane segment at 198 to 217 (LMLVATILFTLMPLLLIVIS) threads the bilayer. The Cytoplasmic portion of the chain corresponds to 218-237 (YSLIISSILKIHSSEGRSKA). A helical transmembrane segment spans residues 238-258 (FSTCSAHLTVVIIFYGTILFM). Topologically, residues 259-277 (YMKPKSKETLNSDDLDATD) are extracellular. A helical membrane pass occupies residues 278-298 (KIISMFYGVMTPMMNPLIYSL). Residues 299–318 (RNKDVKEAVKHLPNRRFFSK) are Cytoplasmic-facing.

Belongs to the G-protein coupled receptor 1 family.

It localises to the cell membrane. Its function is as follows. Odorant receptor. The protein is Olfactory receptor 13C9 (OR13C9) of Homo sapiens (Human).